The sequence spans 543 residues: Cytochrome P450 307a1 (543 aa).

A Phosphoserine modification is found at Ser-219. The interval 440–460 (FLEPSKEQSPKNSKGSDSGIE) is disordered. The span at 449–460 (PKNSKGSDSGIE) shows a compositional bias: polar residues. Cys-485 provides a ligand contact to heme.

Belongs to the cytochrome P450 family. Heme serves as cofactor.

Its subcellular location is the endoplasmic reticulum membrane. The protein resides in the microsome membrane. Required for correct development of the embryonic midline glial cells which are necessary for the formation of distinct segmental commissures. The protein is Cytochrome P450 307a1 (spo) of Drosophila melanogaster (Fruit fly).